The sequence spans 58 residues: Sodium/potassium-transporting ATPase subunit gamma (58 aa).

A helical membrane pass occupies residues 20 to 39; that stretch reads NGGLIFAALAFIVGLVIILS.

This sequence belongs to the FXYD family. In terms of assembly, regulatory subunit of the sodium/potassium-transporting ATPase which is composed of a catalytic alpha subunit, an auxiliary non-catalytic beta subunit and an additional regulatory subunit. Highest levels expressed in the kidney and spleen. Restricted to the basolateral membrane in renal epithelial cells and varies in its level of expression along the nephron.

It localises to the membrane. May be involved in forming the receptor site for cardiac glycoside binding or may modulate the transport function of the sodium ATPase. This chain is Sodium/potassium-transporting ATPase subunit gamma (FXYD2), found in Bos taurus (Bovine).